The sequence spans 73 residues: RNA-binding protein Hfq (73 aa).

Positions 8 to 68 constitute a Sm domain; sequence DQFLNQIRKE…ISTFAPQKNV (61 aa).

This sequence belongs to the Hfq family. In terms of assembly, homohexamer.

RNA chaperone that binds small regulatory RNA (sRNAs) and mRNAs to facilitate mRNA translational regulation in response to envelope stress, environmental stress and changes in metabolite concentrations. Also binds with high specificity to tRNAs. This chain is RNA-binding protein Hfq, found in Bacillus subtilis (strain 168).